Reading from the N-terminus, the 70-residue chain is Conotoxin Im11.11 (70 aa).

The signal sequence occupies residues 1 to 25 (MFRLTSVGCILLVIAFLNLVGLTNA). 4 disulfide bridges follow: Cys-26–Cys-40, Cys-33–Cys-45, Cys-39–Cys-49, and Cys-44–Cys-53. Pro-56 is subject to Proline amide. Positions 60-70 (TRLQGFFKHRR) are excised as a propeptide.

Belongs to the conotoxin I2 superfamily. Expressed by the venom duct.

The protein localises to the secreted. Its function is as follows. Probable neurotoxin. In Conus imperialis (Imperial cone), this protein is Conotoxin Im11.11.